The chain runs to 357 residues: MEENKQRVKSMINILQLVAPGTPLREGIDNVLRAQTGGLIVLGYNEQIKSIVDGGFHINCAFSPASLYELAKMDGALILNETGSKILISNAQLVPESSIDSIETGMRHRTAERVAKQTGSLVVAISQRRNVITLYQGNLRYTLKDIGVILTKANQAIQTLEKYKAVWNDGITNLGILEFEEVVTMSEVVHVLHSVEMVLRIKNEILSYIHELGTEGRLIRLQLTELLADLEAEAALLIKDYYQEKTQDHHQILKKLQELANTQLLEDSDLVKLLGYPGQTSLEESVTPRGYRITSKISRVPPLIIENLINRFKTLQGVCRATINELDDVEGIGEVRAKKIREGLKRIQEHLYMSRHN.

Residues 8-146 (VKSMINILQL…GNLRYTLKDI (139 aa)) enclose the DAC domain. ATP contacts are provided by residues Gly75, Leu93, and 106–110 (MRHRT).

Belongs to the DisA family. In terms of assembly, homooctamer. The cofactor is Mg(2+).

The catalysed reaction is 2 ATP = 3',3'-c-di-AMP + 2 diphosphate. In terms of biological role, participates in a DNA-damage check-point that is active prior to asymmetric division when DNA is damaged. DisA forms globular foci that rapidly scan along the chromosomes during sporulation, searching for lesions. When a lesion is present, DisA pauses at the lesion site. This triggers a cellular response that culminates in a temporary block in sporulation initiation. Also has diadenylate cyclase activity, catalyzing the condensation of 2 ATP molecules into cyclic di-AMP (c-di-AMP). c-di-AMP acts as a signaling molecule that couples DNA integrity with progression of sporulation. The rise in c-di-AMP level generated by DisA while scanning the chromosome, operates as a positive signal that advances sporulation; upon encountering a lesion, the DisA focus arrests at the damaged site and halts c-di-AMP synthesis. In Bacillus cereus (strain AH187), this protein is DNA integrity scanning protein DisA.